A 580-amino-acid polypeptide reads, in one-letter code: WD repeat-containing protein 46 (580 aa).

The tract at residues 34–108 (SWKEYKKMKQ…QQEKMKVTKD (75 aa)) is disordered. Composition is skewed to basic and acidic residues over residues 64-85 (TEGR…HDTG) and 98-108 (LQQEKMKVTKD). 6 WD repeats span residues 193-234 (AALD…YTYV), 235-272 (YDNL…NSFL), 274-312 (YVDV…HTNG), 315-354 (SLWS…GLDR), 357-396 (RIWD…NHVQ), and 399-436 (RGMH…IGHA).

Part of the small subunit (SSU) processome.

Its subcellular location is the nucleus. The protein localises to the nucleolus. In terms of biological role, scaffold component of the nucleolar structure. Part of the small subunit (SSU) processome, first precursor of the small eukaryotic ribosomal subunit. Required for 18S rRNA processing. Plays a role in negative regulation of detoxification genes by inhibiting protein levels of transcription factor skn-1, leading to down-regulation of skn-1 target genes. The sequence is that of WD repeat-containing protein 46 from Caenorhabditis elegans.